A 693-amino-acid polypeptide reads, in one-letter code: MDRPDEGPPAKTRRLSSSESPQRDPPPPPPPPPLLRLPLPPPQQRPRLQEETEAAQVLADMRGVGLGPALPPPPPYVILEEGGIRAYFTLGAECPGWDSTIESGYGEAPPPTESLEALPTPEASGGSLEIDFQVVQSSSFGGEGALETCSAVGWAPQRLVDPKSKEEAIIIVEDEDEDERESMRSSRRRRRRRRRKQRKVKRESRERNAERMESILQALEDIQLDLEAVNIKAGKAFLRLKRKFIQMRRPFLERRDLIIQHIPGFWVKAFLNHPRISILINRRDEDIFRYLTNLQVQDLRHISMGYKMKLYFQTNPYFTNMVIVKEFQRNRSGRLVSHSTPIRWHRGQEPQARRHGNQDASHSFFSWFSNHSLPEADRIAEIIKNDLWVNPLRYYLRERGSRIKRKKQEMKKRKTRGRCEVVIMEDAPDYYAVEDIFSEISDIDETIHDIKISDFMETTDYFETTDNEITDINENICDSENPDHNEVPNNETTDNNESADDHETTDNNESADDNNENPEDNNKNTDDNEENPNNNENTYGNNFFKGGFWGSHGNNQDSSDSDNEADEASDDEDNDGNEGDNEGSDDDGNEGDNEGSDDDDRDIEYYEKVIEDFDKDQADYEDVIEIISDESVEEEGIEEGIQQDEDIYEEGNYEEEGSEDVWEEGEDSDDSDLEDVLQVPNGWANPGKRGKTG.

Disordered regions lie at residues 1–56 (MDRP…EAAQ) and 104–125 (GYGE…EASG). Lys11 participates in a covalent cross-link: Glycyl lysine isopeptide (Lys-Gly) (interchain with G-Cter in SUMO2). Phosphoserine occurs at positions 18 and 20. The span at 23-44 (RDPPPPPPPPPLLRLPLPPPQQ) shows a compositional bias: pro residues. Residues Lys163 and Lys165 each participate in a glycyl lysine isopeptide (Lys-Gly) (interchain with G-Cter in SUMO2) cross-link. The tract at residues 175-207 (EDEDERESMRSSRRRRRRRRRKQRKVKRESRER) is disordered. A compositionally biased stretch (basic residues) spans 185–202 (SSRRRRRRRRRKQRKVKR). Thr340 is subject to Phosphothreonine. Disordered stretches follow at residues 474–605 (ENIC…DIEY) and 627–693 (ISDE…GKTG). Residues 487 to 496 (VPNNETTDNN) show a composition bias toward polar residues. The span at 509 to 519 (ESADDNNENPE) shows a compositional bias: acidic residues. Low complexity predominate over residues 531 to 542 (NPNNNENTYGNN). Acidic residues-rich tracts occupy residues 559 to 602 (SDSD…DDRD) and 627 to 675 (ISDE…DLED). Phosphoserine occurs at positions 658, 668, and 671.

This sequence belongs to the nucleosome assembly protein (NAP) family. In terms of assembly, interacts with histones. Interacts with CASK. Part of a complex containing CASK, TBR1 and TSPYL2. In terms of processing, phosphorylation at Ser-20 and/or Thr-340 impairs function on cell proliferation. As to expression, ubiquitously expressed, with highest levels in brain, testis and heart, and lowest levels in liver and pancreas.

The protein resides in the nucleus. Its subcellular location is the cytoplasm. Its function is as follows. Part of the CASK/TBR1/TSPYL2 transcriptional complex which modulates gene expression in response to neuronal synaptic activity, probably by facilitating nucleosome assembly. May inhibit cell proliferation by inducing p53-dependent CDKN1A expression. The protein is Testis-specific Y-encoded-like protein 2 (TSPYL2) of Homo sapiens (Human).